Consider the following 219-residue polypeptide: Elongation factor Ts, chloroplastic (219 aa).

It belongs to the EF-Ts family.

It localises to the plastid. Its subcellular location is the chloroplast. In terms of biological role, associates with the EF-Tu.GDP complex and induces the exchange of GDP to GTP. It remains bound to the aminoacyl-tRNA.EF-Tu.GTP complex up to the GTP hydrolysis stage on the ribosome. In Guillardia theta (Cryptophyte), this protein is Elongation factor Ts, chloroplastic (tsf).